A 484-amino-acid polypeptide reads, in one-letter code: MKFIVKLFPEIMMKSKPVRMRFTKMLETNIRNVLKKVDESAKVQRQWDKIMVMVPDDRPDLIEAFGERLACIPGIAHVLQVNVSTFESVDDIYQQTLAVYKDQLAGKTFCVRVKRAGKHDFNSIEVERYVGGGLNQFTEAAGVRLKNPDMTVNLEIDNEQLYLVDKRIQGLGGFPMATQEDVLSLISGGFDSGVSSYQFIKRGSRTHYCFFNLGGDQHEIGVKQVAYHLWQKYGESHKVKFISVPFDPVVQEILERVDNGQMGVVLKRMMMRAAARVADKMGIQALVTGEAMGQVSSQTLTNLNVIDRCTEQLILRPLIAMDKQDIINISREIGTEDFAKSIPEYCGVISQKPTVKAVLSKVEAEEAKFSDDLIDRVIQDAVIIDIKEIATQMDTKITEAETVAAISADEVIIDVRAPEEEEKDPLEIEGIETKTIPFYKLATQFADLDKDKTYLLYCDRGVMSKLQALYLQEQGYSNVKVYRP.

In terms of domain architecture, THUMP spans 63–167 (EAFGERLACI…NEQLYLVDKR (105 aa)). ATP is bound by residues 185 to 186 (LI), Lys-267, Gly-289, and Gln-298. Cys-346 and Cys-458 are disulfide-bonded. Residues 406–484 (ISADEVIIDV…GYSNVKVYRP (79 aa)) form the Rhodanese domain. Cys-458 (cysteine persulfide intermediate) is an active-site residue.

It belongs to the ThiI family.

Its subcellular location is the cytoplasm. It catalyses the reaction [ThiI sulfur-carrier protein]-S-sulfanyl-L-cysteine + a uridine in tRNA + 2 reduced [2Fe-2S]-[ferredoxin] + ATP + H(+) = [ThiI sulfur-carrier protein]-L-cysteine + a 4-thiouridine in tRNA + 2 oxidized [2Fe-2S]-[ferredoxin] + AMP + diphosphate. The enzyme catalyses [ThiS sulfur-carrier protein]-C-terminal Gly-Gly-AMP + S-sulfanyl-L-cysteinyl-[cysteine desulfurase] + AH2 = [ThiS sulfur-carrier protein]-C-terminal-Gly-aminoethanethioate + L-cysteinyl-[cysteine desulfurase] + A + AMP + 2 H(+). It functions in the pathway cofactor biosynthesis; thiamine diphosphate biosynthesis. In terms of biological role, catalyzes the ATP-dependent transfer of a sulfur to tRNA to produce 4-thiouridine in position 8 of tRNAs, which functions as a near-UV photosensor. Also catalyzes the transfer of sulfur to the sulfur carrier protein ThiS, forming ThiS-thiocarboxylate. This is a step in the synthesis of thiazole, in the thiamine biosynthesis pathway. The sulfur is donated as persulfide by IscS. The polypeptide is tRNA sulfurtransferase (Shewanella piezotolerans (strain WP3 / JCM 13877)).